A 61-amino-acid chain; its full sequence is Bacteriocin mesentericin Y105 (61 aa).

A signal peptide spans 1 to 24 (MTNMKSVEAYQQLDNQNLKKVVGG). C33 and C38 form a disulfide bridge.

It belongs to the bacteriocin class IIA/YGNGV family.

Its subcellular location is the secreted. Bacteriocin active against Listeria monocytogenes. The sequence is that of Bacteriocin mesentericin Y105 (mesY) from Leuconostoc mesenteroides.